The primary structure comprises 441 residues: Amino-acid acetyltransferase (441 aa).

The N-acetyltransferase domain maps to 295-434; it reads EKVRGAGIDD…KALYNFQRRS (140 aa).

This sequence belongs to the acetyltransferase family. ArgA subfamily.

The protein localises to the cytoplasm. The enzyme catalyses L-glutamate + acetyl-CoA = N-acetyl-L-glutamate + CoA + H(+). The protein operates within amino-acid biosynthesis; L-arginine biosynthesis; N(2)-acetyl-L-ornithine from L-glutamate: step 1/4. This chain is Amino-acid acetyltransferase, found in Photobacterium profundum (strain SS9).